The chain runs to 766 residues: MAEGVRRLLGKPGSVSLQPYIKLLKTIEEREEALRKLSDAELTEVATELGNAELPYDRDDLAELCALGREAARRTLGERPFDTQLIGMMALLDGHVAEMATGEGKTLTGALAAVGFALRGQRVHVLSVNDYLARRDAEWMRPLYTLLGVEVGWISQESTTEERRAAYAADITYASVSELGFDVLRDRLATDVSELVVPEPNVAIIDEADSVLVDEARVPLVLAGAAEPAESDAAMAELVRRLRPGIDYKVDDDGRNVHLTDTGINVVEKALGGVDLFSAEDTTLLSRVNLALHAHALLHRDVHYVVRDGKVRLINESRGRIALLQRWPDGLQAAVEAKEHLTPSETGEVLDSITVQSLVLRYPIRCGMTGTAMAVAEQLREFYELEVAVIAPNKPNIRIDEEDRLYATAEEKEEAVVEKVKEVHATGRPILIGTQDVAESERLAKRLRRAGLECVVLNAKNDAEEAAVIAEAGTYGRITVSTQMAGRGTDIRLGGSDMRDRDRVVKTGGLYVIGYGRYPSSRLDDQLRGRAGRQGDPGGSVFYVSVEDDLITTNLPEAKGYRVSSADGEITDPAWKEMVNHAQRIAEGQLLELHRNTWRYNQIIDVQRSVVLEQRRAVLHEDLGSRQLAVDCPETYQRLVEEVGEEEVARAARLVTLYHLDRGWADHNAFLADLREGIHLRFLGRRDPLDEFNRDAVPAFKGFLDEARARAAEMFEKLEVVDGRLDVAAAGVKRPSTTWTYMVQDQPFSTDLENIVGRVKNLMGRD.

ATP-binding positions include glutamine 84, 102-106 (GEGKT), and aspartate 490.

Belongs to the SecA family. In terms of assembly, monomer and homodimer. Part of the essential Sec protein translocation apparatus which comprises SecA, SecYEG and auxiliary proteins SecDF. Other proteins may also be involved.

Its subcellular location is the cell membrane. It is found in the cytoplasm. The catalysed reaction is ATP + H2O + cellular proteinSide 1 = ADP + phosphate + cellular proteinSide 2.. Its function is as follows. Part of the Sec protein translocase complex. Interacts with the SecYEG preprotein conducting channel. Has a central role in coupling the hydrolysis of ATP to the transfer of proteins into and across the cell membrane, serving as an ATP-driven molecular motor driving the stepwise translocation of polypeptide chains across the membrane. The chain is Protein translocase subunit SecA 2 from Thermobifida fusca (strain YX).